We begin with the raw amino-acid sequence, 466 residues long: uncharacterized protein (466 aa).

Positions Asn4–Leu199 constitute a C2 NT-type domain. Disordered stretches follow at residues Ala262–Ile298, Leu374–Met393, and Glu400–Arg452. Residues Thr266–Ile298 show a composition bias toward polar residues. A phosphoserine mark is found at Ser433 and Ser439.

To S.pombe SpCC1494.08c.

This is an uncharacterized protein from Saccharomyces cerevisiae (strain ATCC 204508 / S288c) (Baker's yeast).